A 309-amino-acid chain; its full sequence is High-affinity zinc uptake system protein AztC (309 aa).

An N-terminal signal peptide occupies residues 1–24; it reads MKDWLFRIATCSIMTFSSLAAAQA. Histidine 61 contacts Zn(2+). Positions 117-132 are D-loop; the sequence is GGGHYHYIDGKAVFHA. Histidine 138 lines the Zn(2+) pocket. A disulfide bridge connects residues cysteine 158 and cysteine 165. Histidine 204 provides a ligand contact to Zn(2+). Residues 222 to 229 are Z-loop; that stretch reads QGVSTESE. Residue aspartate 279 coordinates Zn(2+).

The protein belongs to the bacterial solute-binding protein 9 family. As to quaternary structure, monomer.

Its subcellular location is the periplasm. Its function is as follows. Part of the ATP-binding cassette (ABC) transport system AztABCD involved in zinc import. Binds zinc with high affinity and specificity and delivers it to the membrane permease for translocation into the cytoplasm. The polypeptide is High-affinity zinc uptake system protein AztC (Paracoccus denitrificans (strain Pd 1222)).